The primary structure comprises 483 residues: Regulatory protein ViaA (483 aa).

Belongs to the ViaA family. In terms of assembly, homodimer. Interacts with RavA.

It is found in the cytoplasm. Its function is as follows. Component of the RavA-ViaA chaperone complex, which may act on the membrane to optimize the function of some of the respiratory chains. ViaA stimulates the ATPase activity of RavA. This is Regulatory protein ViaA from Escherichia coli O6:K15:H31 (strain 536 / UPEC).